We begin with the raw amino-acid sequence, 326 residues long: MKFGGYFTKSVDDLKIDEELSKLIPENTMSDKIKNEIQKYGFLYPVIIDQNGFVIDGYTRVRIAKELGIKEVPVIVYIFDSPEERMRSAIQLNVIRRHLTHEQIEQLYQKYLSTGLSPKEAVKKLDKELKQENIRIKNLEPKMRAVEILQSEAPELFELLAKYQLDPQLLLQFYLSIKEFYDYFKQLPEEKKLEILRSERLLLQVEAEPALLKQFAEAEKFASSVTSVPTTEQEDNGDLESFYRGVDGNEEELIRSKEELNEALEQMGLGTEEEEAENQDEQLFSEFIEELKSGSVTAVPKSIEVYKKENGRLIKIEGEIYLKRKS.

It belongs to the ParB family.

This is an uncharacterized protein from Acidianus two-tailed virus (ATV).